Reading from the N-terminus, the 337-residue chain is Ribosomal RNA small subunit methyltransferase C (337 aa).

It belongs to the methyltransferase superfamily. RsmC family. As to quaternary structure, monomer.

It is found in the cytoplasm. The catalysed reaction is guanosine(1207) in 16S rRNA + S-adenosyl-L-methionine = N(2)-methylguanosine(1207) in 16S rRNA + S-adenosyl-L-homocysteine + H(+). Its function is as follows. Specifically methylates the guanine in position 1207 of 16S rRNA in the 30S particle. In Acinetobacter baumannii (strain ATCC 17978 / DSM 105126 / CIP 53.77 / LMG 1025 / NCDC KC755 / 5377), this protein is Ribosomal RNA small subunit methyltransferase C.